The sequence spans 397 residues: Tyrosine--tRNA ligase (397 aa).

The short motif at 41-50 (PTAPDLHLGH) is the 'HIGH' region element. The short motif at 225–229 (KMSKS) is the 'KMSKS' region element. Residue K228 participates in ATP binding. One can recognise an S4 RNA-binding domain in the interval 340–396 (AFLADSGLAGSRGEAKRLIKQGALSLDGEKLDDPNTPLTAGEYVVRLGKKRFLRLIV).

It belongs to the class-I aminoacyl-tRNA synthetase family. TyrS type 2 subfamily. In terms of assembly, homodimer.

The protein resides in the cytoplasm. It carries out the reaction tRNA(Tyr) + L-tyrosine + ATP = L-tyrosyl-tRNA(Tyr) + AMP + diphosphate + H(+). Functionally, catalyzes the attachment of tyrosine to tRNA(Tyr) in a two-step reaction: tyrosine is first activated by ATP to form Tyr-AMP and then transferred to the acceptor end of tRNA(Tyr). The sequence is that of Tyrosine--tRNA ligase from Oleidesulfovibrio alaskensis (strain ATCC BAA-1058 / DSM 17464 / G20) (Desulfovibrio alaskensis).